Consider the following 342-residue polypeptide: Oxygen-dependent coproporphyrinogen-III oxidase (342 aa).

S107 contributes to the substrate binding site. H111 and H121 together coordinate a divalent metal cation. The active-site Proton donor is the H121. Residue 123 to 125 participates in substrate binding; the sequence is NYR. A divalent metal cation contacts are provided by H155 and H185. The important for dimerization stretch occupies residues 277 to 312; it reads YVEFNLVYDRGTIFGLQTNGRTESILMSLPPLVRWE.

The protein belongs to the aerobic coproporphyrinogen-III oxidase family. As to quaternary structure, homodimer. It depends on a divalent metal cation as a cofactor.

The protein resides in the cytoplasm. The enzyme catalyses coproporphyrinogen III + O2 + 2 H(+) = protoporphyrinogen IX + 2 CO2 + 2 H2O. The protein operates within porphyrin-containing compound metabolism; protoporphyrin-IX biosynthesis; protoporphyrinogen-IX from coproporphyrinogen-III (O2 route): step 1/1. In terms of biological role, involved in the heme and chlorophyll biosynthesis. Catalyzes the aerobic oxidative decarboxylation of propionate groups of rings A and B of coproporphyrinogen-III to yield the vinyl groups in protoporphyrinogen-IX. The sequence is that of Oxygen-dependent coproporphyrinogen-III oxidase from Synechococcus sp. (strain ATCC 27144 / PCC 6301 / SAUG 1402/1) (Anacystis nidulans).